A 307-amino-acid polypeptide reads, in one-letter code: Melanoma-associated antigen F1 (307 aa).

The segment at 1–55 (MLQTPESRGLPVPQAEGEKDGGHDGETRAPTASQERPKEELGAGREEGAAEPALT) is disordered. Composition is skewed to basic and acidic residues over residues 16–27 (EGEKDGGHDGET) and 35–48 (ERPK…REEG). Residues 76–277 (LNRTVAELVQ…HWPVQYREAL (202 aa)) form the MAGE domain.

Interacts (via MAGE domain) with RING-type zinc finger-containing E3 ubiquitin-protein ligases LNX1, TRIM27 and NSMCE1; the interaction is direct. As to expression, ubiquitous.

Enhances ubiquitin ligase activity of RING-type zinc finger-containing E3 ubiquitin ligases. Proposed to act through recruitment and/or stabilization of the E2 ubiquitin-conjugating enzyme at the E3:substrate complex. MAGEF1-NSMCE1 ubiquitin ligase complex promotes proteasomal degradation of MMS19, a key component of the cytosolic iron-sulfur protein assembly (CIA) machinery. Down-regulation of MMS19 impairs the activity of several DNA repair and metabolism enzymes such as ERCC2/XPD, FANCJ, RTEL1 and POLD1 that require iron-sulfur clusters as cofactors. May negatively regulate genome integrity by inhibiting homologous recombination-mediated double-strand break DNA repair. The polypeptide is Melanoma-associated antigen F1 (Homo sapiens (Human)).